The sequence spans 271 residues: Cytosolic Fe-S cluster assembly factor NUBP2 (271 aa).

M1 carries the post-translational modification N-acetylmethionine. 22 to 29 (GKGGVGKS) contributes to the ATP binding site. The [4Fe-4S] cluster site is built by C196 and C199.

This sequence belongs to the Mrp/NBP35 ATP-binding proteins family. NUBP2/CFD1 subfamily. In terms of assembly, heterotetramer of 2 NUBP1 and 2 NUBP2 chains. Interacts with KIFC1. Interacts with NUBP1. The cofactor is [4Fe-4S] cluster.

It is found in the nucleus. It localises to the cytoplasm. Its subcellular location is the cytoskeleton. The protein localises to the microtubule organizing center. The protein resides in the centrosome. It is found in the cilium axoneme. It localises to the centriole. Functionally, component of the cytosolic iron-sulfur (Fe/S) protein assembly (CIA) machinery. Required for maturation of extramitochondrial Fe-S proteins. The NUBP1-NUBP2 heterotetramer forms a Fe-S scaffold complex, mediating the de novo assembly of an Fe-S cluster and its transfer to target apoproteins. Negatively regulates cilium formation and structure. The chain is Cytosolic Fe-S cluster assembly factor NUBP2 from Bos taurus (Bovine).